The primary structure comprises 62 residues: Sperm protamine P1 (62 aa).

Positions 1 to 62 (MARYRHSRSR…RYSRRGRRRY (62 aa)) are disordered.

It belongs to the protamine P1 family. In terms of tissue distribution, testis.

The protein localises to the nucleus. It is found in the chromosome. Protamines substitute for histones in the chromatin of sperm during the haploid phase of spermatogenesis. They compact sperm DNA into a highly condensed, stable and inactive complex. The chain is Sperm protamine P1 (PRM1) from Trichosurus vulpecula (Brush-tailed possum).